We begin with the raw amino-acid sequence, 479 residues long: Octopamine receptor (479 aa).

Over 1–57 the chain is Extracellular; sequence MGQAATHDANNYTSINYTEIYDVIEDEKDVCAVADEPNIPCSFGISLAVPEWEAICT. 2 N-linked (GlcNAc...) asparagine glycosylation sites follow: Asn-11 and Asn-16. Residues 58–80 form a helical membrane-spanning segment; it reads AIILTMIIISTVVGNILVILSVF. Residues 81–90 are Cytoplasmic-facing; the sequence is TYKPLRIVQN. Residues 91-112 traverse the membrane as a helical segment; sequence FFIVSLAVADLTVAILVLPLNV. At 113-129 the chain is on the extracellular side; it reads AYSILGQWVFGIYVCKM. Residues 130 to 150 form a helical membrane-spanning segment; that stretch reads WLTCDIMCCTSSILNLCAIAL. The Cytoplasmic portion of the chain corresponds to 151–170; it reads DRYWAITDPINYAQKRTLER. The helical transmembrane segment at 171–193 threads the bilayer; it reads VLFMIGIVWILSLVISSPPLLGW. The Extracellular segment spans residues 194 to 218; that stretch reads NDWPEVFEPDTPCRLTSQPGFVIFS. A helical transmembrane segment spans residues 219–240; that stretch reads SSGSFYIPLVIMTVVYFEIYLA. At 241–407 the chain is on the cytoplasmic side; that stretch reads TKKRLRDRAK…LTRERRAART (167 aa). The disordered stretch occupies residues 260–319; that stretch reads GRNKYETKESDPNDQDSVSSDANPNEHQGGTRLVAENEKKHRTRKLTPKKKPKRRYWSKD. Positions 274 to 287 are enriched in polar residues; the sequence is QDSVSSDANPNEHQ. Over residues 299–315 the composition is skewed to basic residues; the sequence is KHRTRKLTPKKKPKRRY. A helical transmembrane segment spans residues 408-429; that stretch reads LGIIMGVFVVCWLPFFVIYLVI. Over 430-441 the chain is Extracellular; the sequence is PFCVSCCLSNKF. Residues 442–462 form a helical membrane-spanning segment; that stretch reads INFITWLGYVNSALNPLIYTI. Residues 463–479 lie on the Cytoplasmic side of the membrane; that stretch reads FNMDFRRAFKKLLFIKC.

The protein belongs to the G-protein coupled receptor 1 family.

It localises to the cell membrane. In terms of biological role, receptor for octopamine. Octopamine (OA) is a neurotransmitter, neurohormone, and neuromodulator in invertebrates. The activity of this receptor is mediated by G proteins which activate adenylyl cyclase. The protein is Octopamine receptor of Bombyx mori (Silk moth).